A 344-amino-acid polypeptide reads, in one-letter code: MHNKNNTILNMIKGESVSHTPVWFMRQAGRSQPEYRRLKEKYSLFEITHQAELCAYVTHLPVDNYNTDAAVLYKDIMTPLQPIGVDVEIKSGIGPVIHNPIKTIQDVEKLGHIDPKRDVPYVLDTIKLLTEEKLNVPLIGFTGAPFTLASYMIEGGPSKNYNFTKAMMYSDEATWFALMDHLVEMSITYTSAQIEAGAQIIQVFDSWVGALNVQDYRYYIKPAMNKLISGIKEKYNVPVILFGVGASHLADEWNTLPIDVLGLDWRLSIKEASSMNIDKTLQGNLDPSLLLAPWDVIEERLKAILDQGIAHGKHIFNLGHGVFPEVKPETLKRVTTFVHDYTQR.

Substrate-binding positions include 26–30 (RQAGR), Phe-45, Asp-75, Tyr-151, Ser-206, and His-320.

The protein belongs to the uroporphyrinogen decarboxylase family. Homodimer.

It localises to the cytoplasm. It catalyses the reaction uroporphyrinogen III + 4 H(+) = coproporphyrinogen III + 4 CO2. The protein operates within porphyrin-containing compound metabolism; protoporphyrin-IX biosynthesis; coproporphyrinogen-III from 5-aminolevulinate: step 4/4. Catalyzes the decarboxylation of four acetate groups of uroporphyrinogen-III to yield coproporphyrinogen-III. The polypeptide is Uroporphyrinogen decarboxylase (Staphylococcus saprophyticus subsp. saprophyticus (strain ATCC 15305 / DSM 20229 / NCIMB 8711 / NCTC 7292 / S-41)).